The following is a 235-amino-acid chain: RING-H2 finger protein ATL17 (235 aa).

A helical membrane pass occupies residues 1–21 (MLTTTILILLIVILMVSLHLY). The RING-type; atypical zinc finger occupies 76-118 (CSVCLSEFKDNESGRVMPNCKHTFHVHCIDMWFHSHSSCPLCR). Residues 143-167 (VYGDTNHHEGTETTGDSVPEDSQRK) form a disordered region.

Belongs to the RING-type zinc finger family. ATL subfamily.

It is found in the membrane. It catalyses the reaction S-ubiquitinyl-[E2 ubiquitin-conjugating enzyme]-L-cysteine + [acceptor protein]-L-lysine = [E2 ubiquitin-conjugating enzyme]-L-cysteine + N(6)-ubiquitinyl-[acceptor protein]-L-lysine.. It functions in the pathway protein modification; protein ubiquitination. Functionally, may be involved in the early steps of the plant defense signaling pathway. The polypeptide is RING-H2 finger protein ATL17 (ATL17) (Arabidopsis thaliana (Mouse-ear cress)).